The following is a 129-amino-acid chain: KVYGRCELAAAMKRLGLDNFRGYSLGNWVCAAKFESNFNTHATNRNTDGSTDYGILQINSRWWCNDGRTPGSRNLCNIPCSALLSSDTIASVNCAKKIVSDGNGMNAWVAWRKRCKGTDVNAWTRGCRL.

Positions 1-129 constitute a C-type lysozyme domain; sequence KVYGRCELAA…VNAWTRGCRL (129 aa). Disulfide bonds link cysteine 6-cysteine 127, cysteine 30-cysteine 115, cysteine 64-cysteine 80, and cysteine 76-cysteine 94. Active-site residues include glutamate 35 and aspartate 52.

This sequence belongs to the glycosyl hydrolase 22 family. As to quaternary structure, monomer.

It is found in the secreted. It carries out the reaction Hydrolysis of (1-&gt;4)-beta-linkages between N-acetylmuramic acid and N-acetyl-D-glucosamine residues in a peptidoglycan and between N-acetyl-D-glucosamine residues in chitodextrins.. Its function is as follows. Lysozymes have primarily a bacteriolytic function; those in tissues and body fluids are associated with the monocyte-macrophage system and enhance the activity of immunoagents. This Syrmaticus soemmerringii (Copper pheasant) protein is Lysozyme C (LYZ).